A 443-amino-acid chain; its full sequence is Ribosomal protein uS12 methylthiotransferase RimO (443 aa).

The MTTase N-terminal domain maps to 5–116 (PSVAVAHLGC…IVDVIQRAEA (112 aa)). C14, C50, C79, C154, C158, and C161 together coordinate [4Fe-4S] cluster. The Radical SAM core domain occupies 140–370 (TTTEGTAYVR…ALQQPISWQQ (231 aa)). A TRAM domain is found at 372–442 (QQEVGKTVQV…AYDLQGQLVS (71 aa)).

The protein belongs to the methylthiotransferase family. RimO subfamily. [4Fe-4S] cluster is required as a cofactor.

The protein localises to the cytoplasm. It catalyses the reaction L-aspartate(89)-[ribosomal protein uS12]-hydrogen + (sulfur carrier)-SH + AH2 + 2 S-adenosyl-L-methionine = 3-methylsulfanyl-L-aspartate(89)-[ribosomal protein uS12]-hydrogen + (sulfur carrier)-H + 5'-deoxyadenosine + L-methionine + A + S-adenosyl-L-homocysteine + 2 H(+). Its function is as follows. Catalyzes the methylthiolation of an aspartic acid residue of ribosomal protein uS12. This is Ribosomal protein uS12 methylthiotransferase RimO from Acaryochloris marina (strain MBIC 11017).